The primary structure comprises 441 residues: Endothelin receptor type B (441 aa).

An N-terminal signal peptide occupies residues 1-26 (MQPPPSLCGLALLALVLACGMAEVWG). The Extracellular portion of the chain corresponds to 27-100 (EEREMPSAPA…RPTEIKDTFK (74 aa)). The segment at 30–90 (EMPSAPATPP…APRRTPPPCQ (61 aa)) is disordered. The span at 47–65 (LTPSTKTSWPRDSNASLPR) shows a compositional bias: polar residues. A glycan (N-linked (GlcNAc...) asparagine) is linked at asparagine 60. A helical transmembrane segment spans residues 101-125 (YINTVVSCLVFVLGIIGNSTLLRII). Residues 126-136 (YKNKCMRNGPN) lie on the Cytoplasmic side of the membrane. Residues 137–162 (ILIASLALGDLLHIIIDIPINVYKLL) traverse the membrane as a helical segment. Residues 163–174 (AEDWPFGAEMCK) lie on the Extracellular side of the membrane. Cysteine 173 and cysteine 254 form a disulfide bridge. A helical transmembrane segment spans residues 175-196 (LVPFIQKASVGITVLSLCALSI). At 197 to 217 (DRYRAVASWSRIKGIGVPKWT) the chain is on the cytoplasmic side. The helical transmembrane segment at 218–242 (AVEIVLIWVVSVILAVPEAIGFNLV) threads the bilayer. The Extracellular portion of the chain corresponds to 243–270 (TIDYKGSYLRICLLNPTQKTAFMQFYKT). Residues 271 to 295 (AKDWWLFSFYFCLPLAITAFFYTLM) traverse the membrane as a helical segment. The Cytoplasmic segment spans residues 296-323 (TCEMLRKKSGMQIALNDHLKQRREVAKT). The residue at position 304 (serine 304) is a Phosphoserine. A helical membrane pass occupies residues 324-349 (VFCLVLVFGLCWLALHLSRILKLTLY). Residues 350 to 361 (DQNDPNRCELLS) lie on the Extracellular side of the membrane. A helical transmembrane segment spans residues 362–388 (FLLVLDYIGINMASLNSCINPIALYLV). Topologically, residues 389–441 (SKRFKNCFKSCLCCWCQSFEEKQSLEEKQSCLKFKANDHGYDNFRSSNKYSSS) are cytoplasmic. 2 S-palmitoyl cysteine lipidation sites follow: cysteine 402 and cysteine 404. Serine 418 bears the Phosphoserine mark. Tyrosine 438 is modified (phosphotyrosine). Phosphoserine occurs at positions 439, 440, and 441.

This sequence belongs to the G-protein coupled receptor 1 family. Endothelin receptor subfamily. EDNRB sub-subfamily.

It is found in the cell membrane. In terms of biological role, non-specific receptor for endothelin 1, 2, and 3. Mediates its action by association with G proteins that activate a phosphatidylinositol-calcium second messenger system. This Oryctolagus cuniculus (Rabbit) protein is Endothelin receptor type B (EDNRB).